The following is a 388-amino-acid chain: Pepsin A-2/A-3 (388 aa).

The first 15 residues, 1-15, serve as a signal peptide directing secretion; the sequence is MKWLLLLGLVALSEC. Propeptides (activation peptide) lie at residues 16–40 and 41–62; these read IIHK…LLKD and FLKK…APTL. A Peptidase A1 domain is found at 76-385; the sequence is YFGTIGIGTP…DRANNQVGLA (310 aa). Asp-94 is an active-site residue. A disulfide bridge links Cys-107 with Cys-112. The residue at position 130 (Ser-130) is a Phosphoserine. A disulfide bond links Cys-268 and Cys-272. The active site involves Asp-277. An intrachain disulfide couples Cys-311 to Cys-344.

This sequence belongs to the peptidase A1 family. Post-translationally, pepsin A-2 is phosphorylated, but not pepsin A-3. In terms of processing, each pepsinogen is converted to corresponding pepsin at pH 2.0 in part as a result of the release of a 47 AA activation segment and in part as a result of stepwise proteolytic cleavage via an intermediate form(s).

The protein resides in the secreted. It carries out the reaction Preferential cleavage: hydrophobic, preferably aromatic, residues in P1 and P1' positions. Cleaves 1-Phe-|-Val-2, 4-Gln-|-His-5, 13-Glu-|-Ala-14, 14-Ala-|-Leu-15, 15-Leu-|-Tyr-16, 16-Tyr-|-Leu-17, 23-Gly-|-Phe-24, 24-Phe-|-Phe-25 and 25-Phe-|-Tyr-26 bonds in the B chain of insulin.. Shows particularly broad specificity; although bonds involving phenylalanine and leucine are preferred, many others are also cleaved to some extent. This chain is Pepsin A-2/A-3, found in Macaca fuscata fuscata (Japanese macaque).